The primary structure comprises 268 residues: Ribosomal RNA small subunit methyltransferase A (268 aa).

Positions 12, 14, 38, 59, 82, and 107 each coordinate S-adenosyl-L-methionine.

Belongs to the class I-like SAM-binding methyltransferase superfamily. rRNA adenine N(6)-methyltransferase family. RsmA subfamily.

Its subcellular location is the cytoplasm. The catalysed reaction is adenosine(1518)/adenosine(1519) in 16S rRNA + 4 S-adenosyl-L-methionine = N(6)-dimethyladenosine(1518)/N(6)-dimethyladenosine(1519) in 16S rRNA + 4 S-adenosyl-L-homocysteine + 4 H(+). Its function is as follows. Specifically dimethylates two adjacent adenosines (A1518 and A1519) in the loop of a conserved hairpin near the 3'-end of 16S rRNA in the 30S particle. May play a critical role in biogenesis of 30S subunits. The chain is Ribosomal RNA small subunit methyltransferase A from Aster yellows witches'-broom phytoplasma (strain AYWB).